The primary structure comprises 155 residues: MKLLIVAVGQRVPDWAQTAYDDYAKRFPPELKVELKAVKTEPRGSKTLETLYAAERERIEAAIPRGTRVVVLDERGTSLTTKALAQRLKDWQLGGDDVALVIGGPDGLEPAFRQAAHERIRLSDLTLPHAMVRVLLIEQLYRAWSVNAGHPYHRE.

Residues leucine 72, glycine 103, and 122–127 (LSDLTL) each bind S-adenosyl-L-methionine.

Belongs to the RNA methyltransferase RlmH family. Homodimer.

Its subcellular location is the cytoplasm. The enzyme catalyses pseudouridine(1915) in 23S rRNA + S-adenosyl-L-methionine = N(3)-methylpseudouridine(1915) in 23S rRNA + S-adenosyl-L-homocysteine + H(+). Specifically methylates the pseudouridine at position 1915 (m3Psi1915) in 23S rRNA. The sequence is that of Ribosomal RNA large subunit methyltransferase H from Acidovorax ebreus (strain TPSY) (Diaphorobacter sp. (strain TPSY)).